Reading from the N-terminus, the 354-residue chain is Uroporphyrinogen decarboxylase (354 aa).

Substrate contacts are provided by residues 27 to 31 (RQAGR), Asp-77, Tyr-154, Ser-209, and His-327.

It belongs to the uroporphyrinogen decarboxylase family. Homodimer.

Its subcellular location is the cytoplasm. The catalysed reaction is uroporphyrinogen III + 4 H(+) = coproporphyrinogen III + 4 CO2. It functions in the pathway porphyrin-containing compound metabolism; protoporphyrin-IX biosynthesis; coproporphyrinogen-III from 5-aminolevulinate: step 4/4. Its function is as follows. Catalyzes the decarboxylation of four acetate groups of uroporphyrinogen-III to yield coproporphyrinogen-III. The polypeptide is Uroporphyrinogen decarboxylase (Shewanella baltica (strain OS223)).